A 374-amino-acid chain; its full sequence is Peptide chain release factor 2 (374 aa).

Glutamine 248 is modified (N5-methylglutamine).

Belongs to the prokaryotic/mitochondrial release factor family. Post-translationally, methylated by PrmC. Methylation increases the termination efficiency of RF2.

It localises to the cytoplasm. Its function is as follows. Peptide chain release factor 2 directs the termination of translation in response to the peptide chain termination codons UGA and UAA. The polypeptide is Peptide chain release factor 2 (Thermomicrobium roseum (strain ATCC 27502 / DSM 5159 / P-2)).